We begin with the raw amino-acid sequence, 829 residues long: Periplasmic nitrate reductase (829 aa).

The tat-type signal signal peptide spans 1 to 29; it reads MKMTRRAFVKANAAASAAAVAGVTLPASA. The 4Fe-4S Mo/W bis-MGD-type domain maps to 41 to 97; sequence IKWDKAPCRFCGTGCSVLVGTQNGRVVATQGDPEAPVNKGLNCIKGYFLSKIMYGKD. [4Fe-4S] cluster-binding residues include C48, C51, C55, and C83. Mo-bis(molybdopterin guanine dinucleotide)-binding positions include K85, Q152, N177, C181, 214 to 221, 245 to 249, 264 to 266, M374, Q378, N484, 510 to 511, K533, D560, and 718 to 727; these read WGSNMAEM, STYYH, QSD, SD, and TGRVLEHWHT. Residue F794 coordinates substrate. Residues N802 and K819 each coordinate Mo-bis(molybdopterin guanine dinucleotide).

This sequence belongs to the prokaryotic molybdopterin-containing oxidoreductase family. NasA/NapA/NarB subfamily. In terms of assembly, component of the periplasmic nitrate reductase NapAB complex composed of NapA and NapB. [4Fe-4S] cluster is required as a cofactor. The cofactor is Mo-bis(molybdopterin guanine dinucleotide). In terms of processing, predicted to be exported by the Tat system. The position of the signal peptide cleavage has not been experimentally proven.

It is found in the periplasm. The catalysed reaction is 2 Fe(II)-[cytochrome] + nitrate + 2 H(+) = 2 Fe(III)-[cytochrome] + nitrite + H2O. In terms of biological role, catalytic subunit of the periplasmic nitrate reductase complex NapAB. Receives electrons from NapB and catalyzes the reduction of nitrate to nitrite. The polypeptide is Periplasmic nitrate reductase (Aliivibrio fischeri (strain MJ11) (Vibrio fischeri)).